We begin with the raw amino-acid sequence, 173 residues long: Photosystem I assembly protein Ycf3 (173 aa).

TPR repeat units follow at residues A35–P68, G72–Q105, and G120–G153.

This sequence belongs to the Ycf3 family.

It localises to the cellular thylakoid membrane. Functionally, essential for the assembly of the photosystem I (PSI) complex. May act as a chaperone-like factor to guide the assembly of the PSI subunits. The chain is Photosystem I assembly protein Ycf3 from Prochlorococcus marinus (strain MIT 9211).